A 378-amino-acid chain; its full sequence is Chaperone protein DnaJ (378 aa).

A J domain is found at aspartate 5–glycine 70. The CR-type zinc-finger motif lies at glycine 133–serine 211. Zn(2+) contacts are provided by cysteine 146, cysteine 149, cysteine 163, cysteine 166, cysteine 185, cysteine 188, cysteine 199, and cysteine 202. CXXCXGXG motif repeat units lie at residues cysteine 146–glycine 153, cysteine 163–glycine 170, cysteine 185–glycine 192, and cysteine 199–glycine 206.

It belongs to the DnaJ family. In terms of assembly, homodimer. It depends on Zn(2+) as a cofactor.

It is found in the cytoplasm. Functionally, participates actively in the response to hyperosmotic and heat shock by preventing the aggregation of stress-denatured proteins and by disaggregating proteins, also in an autonomous, DnaK-independent fashion. Unfolded proteins bind initially to DnaJ; upon interaction with the DnaJ-bound protein, DnaK hydrolyzes its bound ATP, resulting in the formation of a stable complex. GrpE releases ADP from DnaK; ATP binding to DnaK triggers the release of the substrate protein, thus completing the reaction cycle. Several rounds of ATP-dependent interactions between DnaJ, DnaK and GrpE are required for fully efficient folding. Also involved, together with DnaK and GrpE, in the DNA replication of plasmids through activation of initiation proteins. The polypeptide is Chaperone protein DnaJ (Pectobacterium carotovorum subsp. carotovorum (strain PC1)).